The sequence spans 232 residues: Phosphatidylserine decarboxylase proenzyme (232 aa).

Residue Ser190 is the Schiff-base intermediate with substrate; via pyruvic acid of the active site. At Ser190 the chain carries Pyruvic acid (Ser); by autocatalysis.

The protein belongs to the phosphatidylserine decarboxylase family. PSD-A subfamily. In terms of assembly, heterodimer of a large membrane-associated beta subunit and a small pyruvoyl-containing alpha subunit. Requires pyruvate as cofactor. In terms of processing, is synthesized initially as an inactive proenzyme. Formation of the active enzyme involves a self-maturation process in which the active site pyruvoyl group is generated from an internal serine residue via an autocatalytic post-translational modification. Two non-identical subunits are generated from the proenzyme in this reaction, and the pyruvate is formed at the N-terminus of the alpha chain, which is derived from the carboxyl end of the proenzyme. The post-translation cleavage follows an unusual pathway, termed non-hydrolytic serinolysis, in which the side chain hydroxyl group of the serine supplies its oxygen atom to form the C-terminus of the beta chain, while the remainder of the serine residue undergoes an oxidative deamination to produce ammonia and the pyruvoyl prosthetic group on the alpha chain.

It localises to the cell membrane. The catalysed reaction is a 1,2-diacyl-sn-glycero-3-phospho-L-serine + H(+) = a 1,2-diacyl-sn-glycero-3-phosphoethanolamine + CO2. It functions in the pathway phospholipid metabolism; phosphatidylethanolamine biosynthesis; phosphatidylethanolamine from CDP-diacylglycerol: step 2/2. Functionally, catalyzes the formation of phosphatidylethanolamine (PtdEtn) from phosphatidylserine (PtdSer). In Rhodopseudomonas palustris (strain ATCC BAA-98 / CGA009), this protein is Phosphatidylserine decarboxylase proenzyme.